The following is a 1847-amino-acid chain: Cilia- and flagella-associated protein 65 (1847 aa).

The helical transmembrane segment at 112–132 threads the bilayer; it reads FFTIIPQPIFLSPGITLTLPI. Residues 805-914 enclose the MSP domain; the sequence is DLKLDTHKSI…VHYRIRLVGM (110 aa). A coiled-coil region spans residues 1457 to 1483; the sequence is QRELMRQYHKELQEWNEEKARQEVEFT. The tract at residues 1668-1721 is disordered; it reads YEGRKSKEQEEDLFGKMPGGQEDDEEEEEDEEEAEEEEEEIEEEMSKDEEDIDK. Residues 1688-1720 are compositionally biased toward acidic residues; the sequence is QEDDEEEEEDEEEAEEEEEEIEEEMSKDEEDID.

The protein belongs to the CFAP65 family. In terms of assembly, interacts with CFAP47. Predominantly expressed in testis. Highly expressed in round and elongating spermatids. Expressed also in certain ciliated organs, such as the brain, lung and kidney.

The protein resides in the cell projection. It localises to the cilium. Its subcellular location is the flagellum membrane. The protein localises to the cytoplasmic vesicle. It is found in the secretory vesicle. The protein resides in the acrosome membrane. It localises to the cytoplasm. Its function is as follows. Plays a role in flagellar formation and sperm motility. The protein is Cilia- and flagella-associated protein 65 of Mus musculus (Mouse).